The sequence spans 113 residues: rRNA-processing protein cgrA (113 aa).

Residues 1 to 15 (MSTITTSSVASSNGM) show a composition bias toward polar residues. The tract at residues 1 to 113 (MSTITTSSVA…REKRNKLLHS (113 aa)) is disordered. Positions 37-100 (SYEKRLEARK…EKMHRKRVER (64 aa)) form a coiled coil. The segment covering 38–92 (YEKRLEARKLQEAVKEHEREMREEREAERKAQIQKIKDRRAAKEEKERYEKMAEK) has biased composition (basic and acidic residues). Residues 93–113 (MHRKRVERLKRREKRNKLLHS) show a composition bias toward basic residues.

It belongs to the CGR1 family.

The protein localises to the nucleus. Its subcellular location is the nucleolus. In terms of biological role, involved in nucleolar integrity and required for processing of the pre-rRNA for the 60S ribosome subunit. The sequence is that of rRNA-processing protein cgrA (cgrA) from Aspergillus clavatus (strain ATCC 1007 / CBS 513.65 / DSM 816 / NCTC 3887 / NRRL 1 / QM 1276 / 107).